A 90-amino-acid polypeptide reads, in one-letter code: Conotoxin Im6.2 (90 aa).

The signal sequence occupies residues 1–18; that stretch reads MKLTILLLVAALLVLTQA. A propeptide spanning residues 19 to 29 is cleaved from the precursor; that stretch reads RTERRRVKSRK. Cystine bridges form between C61/C75, C68/C79, and C74/C84. At E89 the chain carries Glutamic acid 1-amide.

The protein belongs to the conotoxin O2 superfamily. As to expression, expressed by the venom duct.

It is found in the secreted. Functionally, probable neurotoxin. The polypeptide is Conotoxin Im6.2 (Conus imperialis (Imperial cone)).